A 601-amino-acid chain; its full sequence is Kelch-like ECH-associated protein 1A (601 aa).

The region spanning 44–117 is the BTB domain; it reads MDELRHHEML…VISRLIDFAY (74 aa). The BACK domain maps to 153-253; the sequence is KNLEPSNVIG…LNAVHIYALP (101 aa). 6 Kelch repeats span residues 292-337, 338-388, 389-435, 436-482, 484-529, and 530-576; these read PTPH…PCSG, LGAC…PRNR, VGVG…ARLG, AGVA…VRSG, GVVC…CRSA, and HGVS…GRSG.

It belongs to the KEAP1 family. In terms of assembly, homodimer and heterodimer; heterodimerizes with keap1b. Component of the BCR(KEAP1) E3 ubiquitin ligase complex, at least composed of 2 molecules of cul3, 2 molecules of keap1 (keap1a and/or keap1b), and rbx1. Interacts with nfe2l2/nrf2; the interaction is direct. Post-translationally, non-enzymatic covalent modifications of reactive cysteines by electrophile metabolites inactivate the BCR(KEAP1) complex. As to expression, widely expressed.

It is found in the cytoplasm. It localises to the nucleus. It functions in the pathway protein modification; protein ubiquitination. Its activity is regulated as follows. Ubiquitin ligase activity of the BCR(KEAP1) complex is inhibited by oxidative stress and electrophile metabolites such as sulforaphane. Electrophile metabolites react with reactive cysteine residues in keap1 and trigger non-enzymatic covalent modifications of these cysteine residues, leading to inactivate the ubiquitin ligase activity of the BCR(KEAP1) complex. Substrate-specific adapter of a BCR (BTB-CUL3-RBX1) E3 ubiquitin ligase complex that regulates the response to oxidative stress by targeting nfe2l2/nrf2 for ubiquitination. Keap1 acts as a key sensor of oxidative and electrophilic stress: in normal conditions, the BCR(KEAP1) complex mediates ubiquitination and degradation of nfe2l2/nrf2, a transcription factor regulating expression of many cytoprotective genes. In response to oxidative stress, different electrophile metabolites trigger non-enzymatic covalent modifications of highly reactive cysteine residues in KEAP1, leading to inactivate the ubiquitin ligase activity of the BCR(KEAP1) complex, promoting nfe2l2/nrf2 nuclear accumulation and expression of phase II detoxifying enzymes. This Danio rerio (Zebrafish) protein is Kelch-like ECH-associated protein 1A.